A 141-amino-acid polypeptide reads, in one-letter code: Small ribosomal subunit protein eS17w (141 aa).

It belongs to the eukaryotic ribosomal protein eS17 family.

This is Small ribosomal subunit protein eS17w (RPS17D) from Arabidopsis thaliana (Mouse-ear cress).